The following is a 153-amino-acid chain: Histone H2B.10 (153 aa).

2 stretches are compositionally biased toward basic and acidic residues: residues 1–28 (MAPK…EKAL) and 36–53 (EKRL…EGKK). Residues 1–61 (MAPKAEKKPA…KKAGRKKAKK (61 aa)) are disordered. 2 positions are modified to N6-acetyllysine: lysine 7 and lysine 37. Lysine 149 participates in a covalent cross-link: Glycyl lysine isopeptide (Lys-Gly) (interchain with G-Cter in ubiquitin).

It belongs to the histone H2B family. The nucleosome is a histone octamer containing two molecules each of H2A, H2B, H3 and H4 assembled in one H3-H4 heterotetramer and two H2A-H2B heterodimers. The octamer wraps approximately 147 bp of DNA. Can be acetylated to form H2BK6ac and H2BK33ac. Post-translationally, monoubiquitinated by BRE1 to form H2BK143ub1 and deubiquitinated by UBP26. Required for heterochromatic histone H3 di- and trimethylation at H3K4me. May give a specific tag for epigenetic transcriptional activation.

The protein resides in the nucleus. It localises to the chromosome. Core component of nucleosome. Nucleosomes wrap and compact DNA into chromatin, limiting DNA accessibility to the cellular machineries which require DNA as a template. Histones thereby play a central role in transcription regulation, DNA repair, DNA replication and chromosomal stability. DNA accessibility is regulated via a complex set of post-translational modifications of histones, also called histone code, and nucleosome remodeling. The protein is Histone H2B.10 (H2B.10) of Oryza sativa subsp. japonica (Rice).